A 271-amino-acid polypeptide reads, in one-letter code: Isoprenyl transferase (271 aa).

Aspartate 35 is a catalytic residue. Aspartate 35 is a binding site for Mg(2+). Substrate is bound by residues 36-39 (GNGR), tryptophan 40, arginine 48, histidine 52, and 80-82 (STE). Asparagine 83 acts as the Proton acceptor in catalysis. Residues tryptophan 84, arginine 86, arginine 207, and 213 to 215 (RIS) each bind substrate. Residue glutamate 226 coordinates Mg(2+).

The protein belongs to the UPP synthase family. Homodimer. It depends on Mg(2+) as a cofactor.

Catalyzes the condensation of isopentenyl diphosphate (IPP) with allylic pyrophosphates generating different type of terpenoids. The polypeptide is Isoprenyl transferase (Enterococcus faecalis (strain ATCC 700802 / V583)).